Consider the following 367-residue polypeptide: MLIEQAYLHGKPESSGLLRSQISDFQVFEELPFLPCGEGEHLFVHIRKTGANTLFVARELAKYFEVKEQLVSYAGLKDRFAVTEQWFGIHVPGKQEYNLDDLNIEGVEVLSYKRHNKKLRTGALTGNRFELILREVTAIKAFTERWQKIVEQGVPNYFGEQRFGIGGGNIERALSLFSGQKVKDKKKRGMYLSAARSHIFNSVLNERIQQQCFDKVAVGDVLMLAGTQSVFHLDEVDSAIQQRFTDKDVDITAPMWGAGELMTSNAPQVLEQEVATKNLEFCEGLPRFGLKQERRRIRLTVSDTDIELLSAEEDSAQEESNAVKISFFLPAGCYATTVLRELLNYQDMTTRIDKRETAVNSNQQDSA.

Residue Asp78 is the Nucleophile of the active site. One can recognise a TRUD domain in the interval 153-300; sequence GVPNYFGEQR…KQERRRIRLT (148 aa).

Belongs to the pseudouridine synthase TruD family.

It catalyses the reaction uridine(13) in tRNA = pseudouridine(13) in tRNA. Responsible for synthesis of pseudouridine from uracil-13 in transfer RNAs. This Colwellia psychrerythraea (strain 34H / ATCC BAA-681) (Vibrio psychroerythus) protein is tRNA pseudouridine synthase D.